The following is a 277-amino-acid chain: Small ribosomal subunit protein uS3 (277 aa).

Residues 38-106 (IRRLLATGLE…QVQLNILEVK (69 aa)) enclose the KH type-2 domain. The interval 217 to 277 (AGVEAGRGAP…SAPSAETTES (61 aa)) is disordered. Residues 225-235 (APDRPRRERPA) show a composition bias toward basic and acidic residues. Residues 242 to 261 (SGSSGTTATSTEAGRAAAET) show a composition bias toward low complexity.

This sequence belongs to the universal ribosomal protein uS3 family. As to quaternary structure, part of the 30S ribosomal subunit. Forms a tight complex with proteins S10 and S14.

Binds the lower part of the 30S subunit head. Binds mRNA in the 70S ribosome, positioning it for translation. The polypeptide is Small ribosomal subunit protein uS3 (Mycobacteroides abscessus (strain ATCC 19977 / DSM 44196 / CCUG 20993 / CIP 104536 / JCM 13569 / NCTC 13031 / TMC 1543 / L948) (Mycobacterium abscessus)).